The primary structure comprises 136 residues: uncharacterized protein (136 aa).

This is an uncharacterized protein from Acheta domesticus (House cricket).